We begin with the raw amino-acid sequence, 256 residues long: Hydroxyethylthiazole kinase (256 aa).

Met-37 provides a ligand contact to substrate. Lys-113 and Thr-159 together coordinate ATP. Substrate is bound at residue Gly-186.

Belongs to the Thz kinase family. Mg(2+) serves as cofactor.

It catalyses the reaction 5-(2-hydroxyethyl)-4-methylthiazole + ATP = 4-methyl-5-(2-phosphooxyethyl)-thiazole + ADP + H(+). Its pathway is cofactor biosynthesis; thiamine diphosphate biosynthesis; 4-methyl-5-(2-phosphoethyl)-thiazole from 5-(2-hydroxyethyl)-4-methylthiazole: step 1/1. Functionally, catalyzes the phosphorylation of the hydroxyl group of 4-methyl-5-beta-hydroxyethylthiazole (THZ). The chain is Hydroxyethylthiazole kinase from Exiguobacterium sibiricum (strain DSM 17290 / CCUG 55495 / CIP 109462 / JCM 13490 / 255-15).